A 424-amino-acid chain; its full sequence is Putative ankyrin repeat protein R858 (424 aa).

ANK repeat units follow at residues 115-144 (HLMC…FTKR), 147-177 (TDHT…SDYF), 184-215 (INDS…SINY), and 219-252 (TGST…DIHE).

The protein is Putative ankyrin repeat protein R858 of Acanthamoeba polyphaga (Amoeba).